A 430-amino-acid polypeptide reads, in one-letter code: Dihydrolipoyllysine-residue acetyltransferase component of pyruvate dehydrogenase complex (430 aa).

A Lipoyl-binding domain is found at 2 to 77 (AFEFRLPDIG…VVGDVIVKID (76 aa)). An N6-lipoyllysine modification is found at K43. Residues 80 to 122 (DAEDMQFKGHDDDSSSKEEPAKEEAPAEQAPVATQTEEVDENR) are disordered. The span at 84–104 (MQFKGHDDDSSSKEEPAKEEA) shows a compositional bias: basic and acidic residues. The region spanning 125–162 (KAMPSVRKYAREKGVNIKAVSGSGKNGRITKEDVDAYL) is the Peripheral subunit-binding (PSBD) domain. Residues 164-199 (GGAPTASNESAASATSEEVAETPAAPAAVSLEGDFP) are disordered. The segment covering 166-193 (APTASNESAASATSEEVAETPAAPAAVS) has biased composition (low complexity). Residue H401 is part of the active site.

This sequence belongs to the 2-oxoacid dehydrogenase family. As to quaternary structure, forms a 24-polypeptide structural core with octahedral symmetry. Requires (R)-lipoate as cofactor.

It catalyses the reaction N(6)-[(R)-dihydrolipoyl]-L-lysyl-[protein] + acetyl-CoA = N(6)-[(R)-S(8)-acetyldihydrolipoyl]-L-lysyl-[protein] + CoA. Its function is as follows. The pyruvate dehydrogenase complex catalyzes the overall conversion of pyruvate to acetyl-CoA and CO(2). It contains multiple copies of three enzymatic components: pyruvate dehydrogenase (E1), dihydrolipoamide acetyltransferase (E2) and lipoamide dehydrogenase (E3). The protein is Dihydrolipoyllysine-residue acetyltransferase component of pyruvate dehydrogenase complex (pdhC) of Staphylococcus aureus (strain Mu50 / ATCC 700699).